A 257-amino-acid chain; its full sequence is Aspartate/glutamate leucyltransferase (257 aa).

The protein belongs to the R-transferase family. Bpt subfamily.

The protein localises to the cytoplasm. The enzyme catalyses N-terminal L-glutamyl-[protein] + L-leucyl-tRNA(Leu) = N-terminal L-leucyl-L-glutamyl-[protein] + tRNA(Leu) + H(+). It catalyses the reaction N-terminal L-aspartyl-[protein] + L-leucyl-tRNA(Leu) = N-terminal L-leucyl-L-aspartyl-[protein] + tRNA(Leu) + H(+). In terms of biological role, functions in the N-end rule pathway of protein degradation where it conjugates Leu from its aminoacyl-tRNA to the N-termini of proteins containing an N-terminal aspartate or glutamate. The sequence is that of Aspartate/glutamate leucyltransferase from Rhodopseudomonas palustris (strain HaA2).